Reading from the N-terminus, the 310-residue chain is Probable L,D-transpeptidase ErfK/SrfK (310 aa).

The first 21 residues, 1–21, serve as a signal peptide directing secretion; the sequence is MRRVNILCSFALLFASHTSLA. Positions 96–231 constitute a L,D-TPase catalytic domain; it reads KGIVVNVAEM…VPVGTRVQII (136 aa). Catalysis depends on His-191, which acts as the Proton donor/acceptor. Cys-207 (nucleophile) is an active-site residue.

This sequence belongs to the YkuD family. Interacts with DsbG.

The protein resides in the periplasm. It participates in cell wall biogenesis; peptidoglycan biosynthesis. Responsible, at least in part, for anchoring of the major outer membrane lipoprotein (Lpp, also known as the Braun lipoprotein) to the peptidoglycan via a meso-diaminopimelyl-L-Lys- bond on the terminal residue of Lpp. The sequence is that of Probable L,D-transpeptidase ErfK/SrfK (erfK) from Escherichia coli (strain K12).